The chain runs to 344 residues: uncharacterized protein (344 aa).

Topologically, residues 1 to 98 (MIDFVKSRDT…NNDEIGIWNY (98 aa)) are cytoplasmic. The helical transmembrane segment at 99–119 (ISVAEMGGVLLFLSYWIWTCL) threads the bilayer. Histidine 120 is a topological domain (lumenal). The helical transmembrane segment at 121–141 (FSKIIFPAQKVICLYIFLFAL) threads the bilayer. Residues 142–198 (NQTLQECIEEYVFSSECIKYRQFYSVYEIIDFLRTNFYRLFVIYCALGFGITRTVPK) lie on the Cytoplasmic side of the membrane. The helical transmembrane segment at 199–219 (YLMIKGISIVIALCSVYWISL) threads the bilayer. Over 220-222 (YKD) the chain is Lumenal. Residues 223–243 (VYVVSEIFDMIQYEVSPAIWV) form a helical membrane-spanning segment. Over 244 to 273 (YSICHLLKQCTSVTTYENASKARFFRRMLN) the chain is Cytoplasmic. A helical membrane pass occupies residues 274–294 (AFIFIFCASPMLHYLSNIIFG). At 295-344 (NFDYRLSVIIGDLFTFMEKIAFPCYIMFPTHNEALAYNRNVAEEAQEKMI) the chain is on the lumenal side.

It belongs to the UPF0742 family.

The protein resides in the endoplasmic reticulum. It localises to the membrane. This is an uncharacterized protein from Schizosaccharomyces pombe (strain 972 / ATCC 24843) (Fission yeast).